We begin with the raw amino-acid sequence, 176 residues long: Peptide methionine sulfoxide reductase MsrA (176 aa).

Cysteine 10 is an active-site residue.

Belongs to the MsrA Met sulfoxide reductase family.

It catalyses the reaction L-methionyl-[protein] + [thioredoxin]-disulfide + H2O = L-methionyl-(S)-S-oxide-[protein] + [thioredoxin]-dithiol. It carries out the reaction [thioredoxin]-disulfide + L-methionine + H2O = L-methionine (S)-S-oxide + [thioredoxin]-dithiol. Functionally, has an important function as a repair enzyme for proteins that have been inactivated by oxidation. Catalyzes the reversible oxidation-reduction of methionine sulfoxide in proteins to methionine. In Leptospira borgpetersenii serovar Hardjo-bovis (strain L550), this protein is Peptide methionine sulfoxide reductase MsrA.